The chain runs to 563 residues: Arginine--tRNA ligase (563 aa).

The short motif at 121 to 131 (PNIAKPFSIGH) is the 'HIGH' region element.

The protein belongs to the class-I aminoacyl-tRNA synthetase family. In terms of assembly, monomer.

The protein resides in the cytoplasm. The catalysed reaction is tRNA(Arg) + L-arginine + ATP = L-arginyl-tRNA(Arg) + AMP + diphosphate. In Streptococcus equi subsp. equi (strain 4047), this protein is Arginine--tRNA ligase.